The sequence spans 429 residues: Melanoma-associated antigen 11 (429 aa).

Disordered regions lie at residues 1 to 30 (METQ…GDFG) and 188 to 215 (IFGS…IDPE). Positions 194–209 (DEGSGSQEKEGPSTSP) are enriched in polar residues. Residues 222 to 421 (LHDKIIDLVH…TSYPSLYEDA (200 aa)) form the MAGE domain.

In terms of tissue distribution, expressed in tumors of several types, such as melanoma, head and neck squamous cell carcinoma, lung carcinoma and breast carcinoma. Expressed in testis, ovary, prostate, cancerous prostate, breast and adrenal tissue.

The protein localises to the nucleus. It is found in the cytoplasm. Its function is as follows. Acts as androgen receptor coregulator that increases androgen receptor activity by modulating the receptors interdomain interaction. May play a role in embryonal development and tumor transformation or aspects of tumor progression. This is Melanoma-associated antigen 11 from Homo sapiens (Human).